Reading from the N-terminus, the 567-residue chain is Potassium-transporting ATPase potassium-binding subunit (567 aa).

The next 11 helical transmembrane spans lie at 3 to 23, 64 to 84, 136 to 156, 179 to 199, 254 to 274, 285 to 305, 330 to 350, 357 to 376, 421 to 441, 473 to 495, and 527 to 547; these read FIGW…VKPL, LTFT…IYAV, ALTH…MALI, LYVL…QGMP, LSNF…TNVF, WAIL…AYWA, FGIV…CGAV, FTAL…EIIV, MLAI…AVVL, AFGG…MFVG, and GGLF…LTFF.

The protein belongs to the KdpA family. As to quaternary structure, the system is composed of three essential subunits: KdpA, KdpB and KdpC.

It is found in the cell inner membrane. Its function is as follows. Part of the high-affinity ATP-driven potassium transport (or Kdp) system, which catalyzes the hydrolysis of ATP coupled with the electrogenic transport of potassium into the cytoplasm. This subunit binds the periplasmic potassium ions and delivers the ions to the membrane domain of KdpB through an intramembrane tunnel. The chain is Potassium-transporting ATPase potassium-binding subunit from Rhodopseudomonas palustris (strain ATCC BAA-98 / CGA009).